The following is a 378-amino-acid chain: Envelope glycoprotein M (378 aa).

Topologically, residues 1–16 (MKSSKSDLFIYKTWFK) are intravirion. Residues 17 to 37 (LLVLYFVMFVLSATVPIAASF) traverse the membrane as a helical segment. Over 38–84 (PGLGFPCYYNALVNYSAINLTERNVAKHLTPTLYLEEPEMFAYMTFT) the chain is Virion surface. The chain crosses the membrane as a helical span at residues 85 to 105 (FLVDCFAAVYYFLGALAIMLA). Residues 106–118 (KRHFVVSLTTLSQ) lie on the Intravirion side of the membrane. Residues 119 to 139 (WIAMVGTPTLILIGMWRMWTI) form a helical membrane-spanning segment. Residues 140-150 (QLFIQTLSYKH) are Virion surface-facing. The chain crosses the membrane as a helical span at residues 151–171 (IYLSAFVYLIHFLLSFLHTQC). Residues 172–210 (YISRNSQLWSLKVLEQGIPPNTLLDTVVFTIKPLLANCQ) are Intravirion-facing. The helical transmembrane segment at 211-231 (LFCLGLEMLVFSLSFMMAIGN) threads the bilayer. Residues 232–239 (SFYVLVSD) lie on the Virion surface side of the membrane. The helical transmembrane segment at 240-260 (IVFGAINLYLALVLFWVLLTE) threads the bilayer. Residues 261-268 (LYLVKYMT) lie on the Intravirion side of the membrane. The chain crosses the membrane as a helical span at residues 269–289 (FVMGFYLGGLIGCIFLLVPLW). Residues 290–303 (RYEQIFVAANLRSP) lie on the Virion surface side of the membrane. A helical membrane pass occupies residues 304 to 324 (ILINILVIFFLCTLSALVRLL). At 325 to 378 (RMTWFSPTKPSYEPIQLKNIKHRRVKLQSPSGPSILEEGSSDEGSEDSEEEEEL) the chain is on the intravirion side. Residues 347 to 378 (RRVKLQSPSGPSILEEGSSDEGSEDSEEEEEL) form a disordered region. Over residues 363 to 378 (GSSDEGSEDSEEEEEL) the composition is skewed to acidic residues.

The protein belongs to the herpesviridae glycoprotein M family. Interacts (via N-terminus) with gN (via N-terminus). The gM-gN heterodimer forms the gCII complex.

It localises to the virion membrane. The protein localises to the host Golgi apparatus. Its subcellular location is the host trans-Golgi network. The protein resides in the host endosome membrane. It is found in the host nucleus inner membrane. Functionally, envelope glycoprotein important for virion assembly and egress. Plays a role in the correct incorporation of gH-gL into virion membrane. Directs the glycoprotein N (gN) to the host trans-Golgi network. The sequence is that of Envelope glycoprotein M from Equus caballus (Horse).